The following is a 143-amino-acid chain: uncharacterized protein (143 aa).

4 helical membrane passes run 7–29, 52–74, 87–105, and 120–142; these read LFLF…LSLV, FSLY…NTYL, LGVF…LWAG, and WLGI…IRLG.

The protein localises to the cell membrane. This is an uncharacterized protein from Aquifex aeolicus (strain VF5).